The following is a 143-amino-acid chain: Large ribosomal subunit protein uL16 (143 aa).

This sequence belongs to the universal ribosomal protein uL16 family. As to quaternary structure, part of the 50S ribosomal subunit.

Its function is as follows. Binds 23S rRNA and is also seen to make contacts with the A and possibly P site tRNAs. This Fusobacterium nucleatum subsp. nucleatum (strain ATCC 25586 / DSM 15643 / BCRC 10681 / CIP 101130 / JCM 8532 / KCTC 2640 / LMG 13131 / VPI 4355) protein is Large ribosomal subunit protein uL16.